The primary structure comprises 389 residues: 26S proteasome regulatory subunit 10B (389 aa).

At Lys-72 the chain carries N6-acetyllysine. Position 174–181 (174–181 (GPPGTGKT)) interacts with ATP. Lys-206 carries the N6-acetyllysine modification. Residue Ser-244 is modified to Phosphoserine.

The protein belongs to the AAA ATPase family. As to quaternary structure, component of the 19S proteasome regulatory particle complex. The 26S proteasome consists of a 20S core particle (CP) and two 19S regulatory subunits (RP). The regulatory particle is made of a lid composed of 9 subunits, a base containing 6 ATPases including PSMC6 and few additional components. Interacts with PAAF1.

The protein resides in the cytoplasm. It is found in the nucleus. Its function is as follows. Component of the 26S proteasome, a multiprotein complex involved in the ATP-dependent degradation of ubiquitinated proteins. This complex plays a key role in the maintenance of protein homeostasis by removing misfolded or damaged proteins, which could impair cellular functions, and by removing proteins whose functions are no longer required. Therefore, the proteasome participates in numerous cellular processes, including cell cycle progression, apoptosis, or DNA damage repair. PSMC6 belongs to the heterohexameric ring of AAA (ATPases associated with diverse cellular activities) proteins that unfolds ubiquitinated target proteins that are concurrently translocated into a proteolytic chamber and degraded into peptides. This is 26S proteasome regulatory subunit 10B (PSMC6) from Bos taurus (Bovine).